The sequence spans 1285 residues: Tat-binding homolog 7 (1285 aa).

Disordered regions lie at residues 1 to 95 (MARS…LTYR), 121 to 173 (MSDD…RTRR), 224 to 243 (GREEEEEGDEEEAESGEKEQ), and 258 to 359 (QEDE…ERGR). 2 stretches are compositionally biased toward acidic residues: residues 226-237 (EEEEEGDEEEAE) and 258-270 (QEDEESSNAESSE). Over residues 311–325 (NRHHRNRNTSNRRRR) the composition is skewed to basic residues. Position 446 to 453 (446 to 453 (GPPGTGKT)) interacts with ATP. In terms of domain architecture, Bromo spans 928-1032 (ALQRQMRMFF…NTFRDAIDDM (105 aa)). Positions 1100–1196 (EKLKEKLGIS…PTIQSSSSQE (97 aa)) are disordered. Positions 1136–1149 (KLNKKKKDQKRNKK) are enriched in basic residues. Acidic residues predominate over residues 1155–1175 (PDGDDTEETEEAVAENNVDAD).

This sequence belongs to the AAA ATPase family.

Its function is as follows. Thought to form a complex that enhances transcription from repetitive DNA sequences by modulating chromatin structure. This chain is Tat-binding homolog 7, found in Caenorhabditis briggsae.